Reading from the N-terminus, the 222-residue chain is PKHD-type hydroxylase cce_3668 (222 aa).

Residues 78–175 (HIHSLRFSRY…RLVVVGWVHS (98 aa)) form the Fe2OG dioxygenase domain. His-96, Asp-98, and His-156 together coordinate Fe cation. A 2-oxoglutarate-binding site is contributed by Arg-166.

Fe(2+) serves as cofactor. The cofactor is L-ascorbate.

This Crocosphaera subtropica (strain ATCC 51142 / BH68) (Cyanothece sp. (strain ATCC 51142)) protein is PKHD-type hydroxylase cce_3668.